A 155-amino-acid polypeptide reads, in one-letter code: Transcriptional repressor NrdR (155 aa).

A zinc finger spans residues 3–34 (CPFCGHSSTQVLDSRVSEDGDTVRRRRRCEAC). One can recognise an ATP-cone domain in the interval 49-139 (PAIVKKNGSR…VYRSFEDVSE (91 aa)).

Belongs to the NrdR family. It depends on Zn(2+) as a cofactor.

Functionally, negatively regulates transcription of bacterial ribonucleotide reductase nrd genes and operons by binding to NrdR-boxes. The chain is Transcriptional repressor NrdR from Cupriavidus metallidurans (strain ATCC 43123 / DSM 2839 / NBRC 102507 / CH34) (Ralstonia metallidurans).